The following is a 521-amino-acid chain: NAD(P)H-quinone oxidoreductase subunit 2 (521 aa).

14 helical membrane-spanning segments follow: residues 16 to 36 (ILPEGIVIVTLLLVLIVDLIG), 40 to 60 (VALALPYLAIAGLLVSVGLLV), 80 to 100 (LSIIFRAIIALSTVVTILMSV), 110 to 130 (LAEFIAILLTATLGGMFLSAA), 133 to 153 (LVMVFISLEMLSISSYLMTGY), 168 to 188 (LLIGASSSAIFLYGLSLLYGL), 212 to 232 (LGLAIALVFVIAGIAFKISAV), 246 to 266 (PTPVVAFLSVGSKAAGFAVAI), 280 to 300 (WHVIFTALAVLSMVLGNVVAL), 308 to 328 (MLAYSSIGQAGFVMIGLVAGS), 336 to 356 (VFYMLIYLFMNLGAFSCIILF), 380 to 400 (LGLSICLLSLGGIPPLAGFFG), 402 to 422 (IYIFWAGWQSGLYGLVLLGLV), and 468 to 488 (VGIVATLVATSLAGILANPLF).

It belongs to the complex I subunit 2 family. NDH-1 can be composed of about 15 different subunits; different subcomplexes with different compositions have been identified which probably have different functions.

The protein resides in the cellular thylakoid membrane. The catalysed reaction is a plastoquinone + NADH + (n+1) H(+)(in) = a plastoquinol + NAD(+) + n H(+)(out). It carries out the reaction a plastoquinone + NADPH + (n+1) H(+)(in) = a plastoquinol + NADP(+) + n H(+)(out). Functionally, NDH-1 shuttles electrons from an unknown electron donor, via FMN and iron-sulfur (Fe-S) centers, to quinones in the respiratory and/or the photosynthetic chain. The immediate electron acceptor for the enzyme in this species is believed to be plastoquinone. Couples the redox reaction to proton translocation, and thus conserves the redox energy in a proton gradient. Cyanobacterial NDH-1 also plays a role in inorganic carbon-concentration. The chain is NAD(P)H-quinone oxidoreductase subunit 2 from Synechocystis sp. (strain ATCC 27184 / PCC 6803 / Kazusa).